Consider the following 194-residue polypeptide: Recombination protein RecR (194 aa).

The segment at 53–68 adopts a C4-type zinc-finger fold; that stretch reads CEICFNLDVTSPCSIC. One can recognise a Toprim domain in the interval 76–171; it reads SLLCIVEELG…KVTRLACGIP (96 aa).

This sequence belongs to the RecR family.

May play a role in DNA repair. It seems to be involved in an RecBC-independent recombinational process of DNA repair. It may act with RecF and RecO. The chain is Recombination protein RecR from Anaplasma phagocytophilum (strain HZ).